A 405-amino-acid polypeptide reads, in one-letter code: MADPKYADLPGIARNEPDVYETSDLPEDDQAEFDAELEELTSTSVEHIIVNPNAAYDKFKDKRVGTKGLDFSDRIGKTKRTGYESGEYEMLGEGLGVKETPQQKYQRLLHEVQELTTEVEKIKMTVKESATEEKLTPVVLAKQLAALKQQLVASHLEKLLGPDAAINLTDPDGALAKRLLLQLEATKNTKGAGSGGKTTSGSPPDSSLVTYELHSRPEQDKFSQAAKVAELEKRLTELEATVRCDQDAQNPLSAGLQGACLMETVELLQAKVSALDLAVLDQVEARLQSVLGKVNEIAKHKASVEDADTQSKVHQLYETIQRWSPIASTLPELVQRLVTIKQLHEQAMQFGQLLTHLDTTQQMIACSLKDNATLLTQVQTTMRENLSTVEGNFANIDERMKKLGK.

The interval methionine 1–leucine 25 is disordered. Position 2 is an N-acetylalanine (alanine 2). Tyrosine 6 bears the Phosphotyrosine mark. Serine 85 carries the post-translational modification Phosphoserine. At tyrosine 88 the chain carries Phosphotyrosine. Positions tyrosine 105–glutamate 132 form a coiled coil. Residue threonine 136 is modified to Phosphothreonine. The tract at residues lysine 187 to serine 207 is disordered. Serine 324 carries the phosphoserine modification.

It belongs to the dynactin subunit 2 family. Subunit of dynactin, a multiprotein complex part of a tripartite complex with dynein and a adapter, such as BICDL1, BICD2 or HOOK3. The dynactin complex is built around ACTR1A/ACTB filament and consists of an actin-related filament composed of a shoulder domain, a pointed end and a barbed end. Its length is defined by its flexible shoulder domain. The soulder is composed of 2 DCTN1 subunits, 4 DCTN2 and 2 DCTN3. The 4 DCNT2 (via N-terminus) bind the ACTR1A filament and act as molecular rulers to determine the length. The pointed end is important for binding dynein-dynactin cargo adapters and consists of 4 subunits: ACTR10, DCNT4, DCTN5 and DCTN6. The barbed end is composed of a CAPZA1:CAPZB heterodimers, which binds ACTR1A/ACTB filament and dynactin and stabilizes dynactin. Interacts with BICD2 and CEP135. Interacts with DYNAP. Interacts with ECPAS. Interacts with MAPRE1.

The protein resides in the cytoplasm. It localises to the cytoskeleton. The protein localises to the microtubule organizing center. It is found in the centrosome. Its subcellular location is the membrane. Its function is as follows. Part of the dynactin complex that activates the molecular motor dynein for ultra-processive transport along microtubules. In the dynactin soulder domain, binds the ACTR1A filament and acts as a molecular ruler to determine the length. Modulates cytoplasmic dynein binding to an organelle, and plays a role in prometaphase chromosome alignment and spindle organization during mitosis. Involved in anchoring microtubules to centrosomes. May play a role in synapse formation during brain development. In Sus scrofa (Pig), this protein is Dynactin subunit 2 (DCTN2).